The primary structure comprises 441 residues: Histidine--tRNA ligase (441 aa).

The protein belongs to the class-II aminoacyl-tRNA synthetase family. As to quaternary structure, homodimer.

It localises to the cytoplasm. The catalysed reaction is tRNA(His) + L-histidine + ATP = L-histidyl-tRNA(His) + AMP + diphosphate + H(+). In Synechococcus sp. (strain WH7803), this protein is Histidine--tRNA ligase.